The primary structure comprises 206 residues: Large ribosomal subunit protein uL4 (206 aa).

Residues 43–78 (ARSGNRKQKDREEVKHTTKKPWRQKGTGRARAGMSS) are disordered. Residues 49–58 (KQKDREEVKH) show a composition bias toward basic and acidic residues. Over residues 59 to 70 (TTKKPWRQKGTG) the composition is skewed to basic residues.

The protein belongs to the universal ribosomal protein uL4 family. As to quaternary structure, part of the 50S ribosomal subunit.

In terms of biological role, one of the primary rRNA binding proteins, this protein initially binds near the 5'-end of the 23S rRNA. It is important during the early stages of 50S assembly. It makes multiple contacts with different domains of the 23S rRNA in the assembled 50S subunit and ribosome. Forms part of the polypeptide exit tunnel. This Ralstonia pickettii (strain 12J) protein is Large ribosomal subunit protein uL4.